The following is a 346-amino-acid chain: Tetraacyldisaccharide 4'-kinase (346 aa).

54-61 (TVGGAGKT) serves as a coordination point for ATP.

This sequence belongs to the LpxK family.

The enzyme catalyses a lipid A disaccharide + ATP = a lipid IVA + ADP + H(+). It functions in the pathway glycolipid biosynthesis; lipid IV(A) biosynthesis; lipid IV(A) from (3R)-3-hydroxytetradecanoyl-[acyl-carrier-protein] and UDP-N-acetyl-alpha-D-glucosamine: step 6/6. Its function is as follows. Transfers the gamma-phosphate of ATP to the 4'-position of a tetraacyldisaccharide 1-phosphate intermediate (termed DS-1-P) to form tetraacyldisaccharide 1,4'-bis-phosphate (lipid IVA). The polypeptide is Tetraacyldisaccharide 4'-kinase (Sinorhizobium fredii (strain NBRC 101917 / NGR234)).